A 523-amino-acid polypeptide reads, in one-letter code: 2-isopropylmalate synthase (523 aa).

Positions 5–267 (VIIFDTTLRD…HTAINHQEIW (263 aa)) constitute a Pyruvate carboxyltransferase domain. Mn(2+)-binding residues include Asp14, His202, His204, and Asn238. The regulatory domain stretch occupies residues 392–523 (RLDYFSVQSG…QHNENNKETV (132 aa)).

Belongs to the alpha-IPM synthase/homocitrate synthase family. LeuA type 1 subfamily. Homodimer. It depends on Mn(2+) as a cofactor.

The protein resides in the cytoplasm. The catalysed reaction is 3-methyl-2-oxobutanoate + acetyl-CoA + H2O = (2S)-2-isopropylmalate + CoA + H(+). It participates in amino-acid biosynthesis; L-leucine biosynthesis; L-leucine from 3-methyl-2-oxobutanoate: step 1/4. In terms of biological role, catalyzes the condensation of the acetyl group of acetyl-CoA with 3-methyl-2-oxobutanoate (2-ketoisovalerate) to form 3-carboxy-3-hydroxy-4-methylpentanoate (2-isopropylmalate). The protein is 2-isopropylmalate synthase of Shigella sonnei (strain Ss046).